A 157-amino-acid chain; its full sequence is UPF0251 protein CLJ_B1488 (157 aa).

The protein belongs to the UPF0251 family.

This Clostridium botulinum (strain 657 / Type Ba4) protein is UPF0251 protein CLJ_B1488.